The chain runs to 149 residues: DnaJ homolog subfamily C member 24 (149 aa).

One can recognise a J domain in the interval 11–82 (DWYSILGADP…ETKKEYDLQR (72 aa)). In terms of domain architecture, DPH-type MB spans 93-148 (VDARIYLEEMSWNEDDHSFSLSCRCGGKYSVSKDEAEEVTLISCDTCSLIIELLHY). Zn(2+) is bound by residues cysteine 115, cysteine 117, cysteine 136, and cysteine 139.

Belongs to the DPH4 family. Monomer and homooligomer. Iron binding promotes oligomerization.

The protein localises to the cytoplasm. Its subcellular location is the cytoskeleton. The protein operates within protein modification; peptidyl-diphthamide biosynthesis. Stimulates the ATPase activity of several Hsp70-type chaperones. This ability is enhanced by iron-binding. The iron-bound form is redox-active and can function as electron carrier. Plays a role in the diphthamide biosynthesis, a post-translational modification of histidine which occurs in translation elongation factor 2 (EEF2). The chain is DnaJ homolog subfamily C member 24 (DNAJC24) from Bos taurus (Bovine).